The following is a 39-amino-acid chain: Photosystem II reaction center protein J (39 aa).

Residues 7–27 form a helical membrane-spanning segment; the sequence is IPLWLIATVGGTAALTVVGLF.

The protein belongs to the PsbJ family. In terms of assembly, PSII is composed of 1 copy each of membrane proteins PsbA, PsbB, PsbC, PsbD, PsbE, PsbF, PsbH, PsbI, PsbJ, PsbK, PsbL, PsbM, PsbT, PsbX, PsbY, PsbZ, Psb30/Ycf12, at least 3 peripheral proteins of the oxygen-evolving complex and a large number of cofactors. It forms dimeric complexes.

The protein resides in the plastid. Its subcellular location is the chloroplast thylakoid membrane. One of the components of the core complex of photosystem II (PSII). PSII is a light-driven water:plastoquinone oxidoreductase that uses light energy to abstract electrons from H(2)O, generating O(2) and a proton gradient subsequently used for ATP formation. It consists of a core antenna complex that captures photons, and an electron transfer chain that converts photonic excitation into a charge separation. The polypeptide is Photosystem II reaction center protein J (Rhodomonas salina (Cryptomonas salina)).